Reading from the N-terminus, the 213-residue chain is Phosphoenolpyruvate guanylyltransferase (213 aa).

Residues threonine 146, glycine 161, and serine 164 each coordinate phosphoenolpyruvate.

The protein belongs to the CofC family.

It catalyses the reaction phosphoenolpyruvate + GTP + H(+) = enolpyruvoyl-2-diphospho-5'-guanosine + diphosphate. The protein operates within cofactor biosynthesis; coenzyme F420 biosynthesis. Functionally, guanylyltransferase that catalyzes the activation of phosphoenolpyruvate (PEP) as enolpyruvoyl-2-diphospho-5'-guanosine, via the condensation of PEP with GTP. It is involved in the biosynthesis of coenzyme F420, a hydride carrier cofactor. The polypeptide is Phosphoenolpyruvate guanylyltransferase (Mycolicibacterium vanbaalenii (strain DSM 7251 / JCM 13017 / BCRC 16820 / KCTC 9966 / NRRL B-24157 / PYR-1) (Mycobacterium vanbaalenii)).